A 1130-amino-acid polypeptide reads, in one-letter code: MATSLITRKLRSAEATNDVEPGWLKRQVTGVLQSISSHACQHPIHTIVVIALLASTTYVGLLEGSLFDSVRNSRNIAGQVDVDTLLQGSRNLRLGESTSWKWQVEDSLASQDYTGVNHLALTTFIFSDSLSKSSSIAPAATELPIPSNASAQPVPFTPNLFSPFSHDSSLAFTLPFDQVPQFLKAVQEIPDTSSDEDDGEQKKWIMRAARGSAYGSGGAIKLWLADAWGSFVDLIKHAETIDIVIMTLGYLSMHLSFVSLFFSMRRLGSNFWLAATVLFSGVFAFLFGLLVTTKLGVPINVLLLSEGLPFLVVTIGFEKPIILTRAVLTAAADNRGRAGQASSSTTKSIQDSIQTAIKEQGFEIIRDYCIEIAILIAGAASGVQGGLRQFCFLAAWILFFDCVLLFTFYTTILCIKLEINRIKRHITLRKALEEDGITHRVAENVASSNDWPLTESESSNKTSIFGRKLRSSSVRRFKILMVGGFVLVNVVNLSTIPFRDSSQGAGLPLLSRVSNVFAPTPIDPFKVAENGLDSIYVSAKSQMMETVVTVIPPIKYKLEYPSVYYAALGESRTFDIEYTDQFLDAVGGRVIESLLKSIEDPIISKWIIAALTLSIILNGYLFNAARWSIKEPEVAPVPAAPTVAVVEAKKEYPKIDLNPDTPKRSLEECEAFLKEKRAAYLSDEELIELSLRGKIPGYALEKTMENEDLMSRVDAFTRAVKIRRAVVARTPATSAITGSLECSKLPYKDYNYTLVHGACCENVIGYLPLPLGVAGPLTIDGQSYFIPMATTEGVLVASTSRGAKAINAGGGAVTVLTGDGMTRGPCVGFPTLARAAAAKVWIDSEEGRSILTAAFNSTSRFARLQHLKTALAGTYLYIRFKTTTGDAMGMNMISKGVEKALHVMATECGFDDMATISVSGNFCTDKKAAAINWIDGRGKSVVAEAIIPGDVVRSVLKSDVNALVELNTSKNLIGSAMAGSVGGFNAHASNIVTAVFLATGQDPAQNVESSSCITTMRNLNGNLQIAVSMPSIEVGTIGGGTILEAQSAMLDMLGVRGSHPTNPGDNARQLARIVAAAVLAGELSLCSALAAGHLVRAHMAHNRSAATTRTSTPVSAAVSAARGLTMSSSE.

Over 1–46 (MATSLITRKLRSAEATNDVEPGWLKRQVTGVLQSISSHACQHPIHT) the chain is Cytoplasmic. The chain crosses the membrane as a helical span at residues 47-67 (IVVIALLASTTYVGLLEGSLF). The Lumenal portion of the chain corresponds to 68-242 (DSVRNSRNIA…DLIKHAETID (175 aa)). Asparagine 148 is a glycosylation site (N-linked (GlcNAc...) asparagine). Residues 242 to 415 (DIVIMTLGYL…FTFYTTILCI (174 aa)) enclose the SSD domain. The chain crosses the membrane as a helical span at residues 243–263 (IVIMTLGYLSMHLSFVSLFFS). The Cytoplasmic segment spans residues 264–270 (MRRLGSN). Residues 271 to 291 (FWLAATVLFSGVFAFLFGLLV) traverse the membrane as a helical segment. The Lumenal portion of the chain corresponds to 292 to 296 (TTKLG). The chain crosses the membrane as a helical span at residues 297–317 (VPINVLLLSEGLPFLVVTIGF). Topologically, residues 318–366 (EKPIILTRAVLTAAADNRGRAGQASSSTTKSIQDSIQTAIKEQGFEIIR) are cytoplasmic. Residues 367 to 387 (DYCIEIAILIAGAASGVQGGL) form a helical membrane-spanning segment. Residues 388 to 389 (RQ) lie on the Lumenal side of the membrane. The helical transmembrane segment at 390 to 410 (FCFLAAWILFFDCVLLFTFYT) threads the bilayer. The Cytoplasmic portion of the chain corresponds to 411–476 (TILCIKLEIN…RKLRSSSVRR (66 aa)). Residues 477 to 497 (FKILMVGGFVLVNVVNLSTIP) form a helical membrane-spanning segment. Residues 498–601 (FRDSSQGAGL…ESLLKSIEDP (104 aa)) are Lumenal-facing. A helical membrane pass occupies residues 602–622 (IISKWIIAALTLSIILNGYLF). Residues 623-1130 (NAARWSIKEP…ARGLTMSSSE (508 aa)) are Cytoplasmic-facing. The Charge relay system role is filled by glutamate 792. 798–804 (STSRGAK) is a binding site for CoA. NADP(+) contacts are provided by residues 859–861 (SRF) and 886–894 (DAMGMNMIS). Lysine 926 acts as the Charge relay system in catalysis. 955–957 (VLK) lines the CoA pocket. The Charge relay system role is filled by aspartate 1002. 1097–1098 (AH) provides a ligand contact to CoA. Histidine 1098 functions as the Proton donor in the catalytic mechanism. 1102–1103 (NR) provides a ligand contact to NADP(+). Residues 1103–1122 (RSAATTRTSTPVSAAVSAAR) are compositionally biased toward low complexity. The interval 1103 to 1130 (RSAATTRTSTPVSAAVSAARGLTMSSSE) is disordered.

Belongs to the HMG-CoA reductase family.

Its subcellular location is the endoplasmic reticulum membrane. The enzyme catalyses (R)-mevalonate + 2 NADP(+) + CoA = (3S)-3-hydroxy-3-methylglutaryl-CoA + 2 NADPH + 2 H(+). The protein operates within metabolic intermediate biosynthesis; (R)-mevalonate biosynthesis; (R)-mevalonate from acetyl-CoA: step 3/3. Its function is as follows. HMG-CoA reductase; part of the first module of ergosterol biosynthesis pathway that includes the early steps of the pathway, conserved across all eukaryotes, and which results in the formation of mevalonate from acetyl-coenzyme A (acetyl-CoA). Hmg1 and hmg2 catalyze the reduction of hydroxymethylglutaryl-CoA (HMG-CoA) to mevalonate. The first module starts with the action of the cytosolic acetyl-CoA acetyltransferase erg10B that catalyzes the formation of acetoacetyl-CoA. The hydroxymethylglutaryl-CoA synthases erg13A and erg13B then condense acetyl-CoA with acetoacetyl-CoA to form HMG-CoA. The rate-limiting step of the early module is the reduction to mevalonate by the 3-hydroxy-3-methylglutaryl-coenzyme A (HMG-CoA) reductases hmg1 and hmg2. Mevalonate is also a precursor for the extracellular siderophore triacetylfusarinine C (TAFC). The sequence is that of 3-hydroxy-3-methylglutaryl-coenzyme A reductase 1 from Aspergillus fumigatus (strain ATCC MYA-4609 / CBS 101355 / FGSC A1100 / Af293) (Neosartorya fumigata).